The sequence spans 145 residues: uncharacterized protein (145 aa).

The signal sequence occupies residues 1 to 20 (MKTCTVICCTALVLGLTAYA).

This is an uncharacterized protein from Aedes vexans (Inland floodwater mosquito).